Consider the following 187-residue polypeptide: Ion-translocating oxidoreductase complex subunit B (187 aa).

The hydrophobic stretch occupies residues 1-26 (MTHILFAVLVLALLALAFGIILGFAA). Residues 32-90 (EADPIVDQLDALLPQTQCGQCGYPGCKPYAEALANGDQINKCVPGGDATMRKIADLMGV) form the 4Fe-4S domain. 12 residues coordinate [4Fe-4S] cluster: Cys49, Cys52, Cys57, Cys73, Cys115, Cys118, Cys121, Cys125, Cys145, Cys148, Cys151, and Cys155. 2 consecutive 4Fe-4S ferredoxin-type domains span residues 106-135 (KVAFIHEDQCIGCTKCIQACPVDAIVGATK) and 136-165 (AMHTVIADECTGCDLCVDPCPTDCIEMIPV).

The protein belongs to the 4Fe4S bacterial-type ferredoxin family. RnfB subfamily. As to quaternary structure, the complex is composed of six subunits: RnfA, RnfB, RnfC, RnfD, RnfE and RnfG. It depends on [4Fe-4S] cluster as a cofactor.

It is found in the cell inner membrane. Its function is as follows. Part of a membrane-bound complex that couples electron transfer with translocation of ions across the membrane. This Aeromonas hydrophila subsp. hydrophila (strain ATCC 7966 / DSM 30187 / BCRC 13018 / CCUG 14551 / JCM 1027 / KCTC 2358 / NCIMB 9240 / NCTC 8049) protein is Ion-translocating oxidoreductase complex subunit B.